A 375-amino-acid chain; its full sequence is Alanine racemase (375 aa).

The active-site Proton acceptor; specific for D-alanine is K35. Residue K35 is modified to N6-(pyridoxal phosphate)lysine. Residue R130 coordinates substrate. Y253 acts as the Proton acceptor; specific for L-alanine in catalysis. M305 is a binding site for substrate.

It belongs to the alanine racemase family. Requires pyridoxal 5'-phosphate as cofactor.

The enzyme catalyses L-alanine = D-alanine. Its pathway is amino-acid biosynthesis; D-alanine biosynthesis; D-alanine from L-alanine: step 1/1. Functionally, catalyzes the interconversion of L-alanine and D-alanine. May also act on other amino acids. The polypeptide is Alanine racemase (alr) (Ralstonia nicotianae (strain ATCC BAA-1114 / GMI1000) (Ralstonia solanacearum)).